We begin with the raw amino-acid sequence, 347 residues long: Isopentenyl-diphosphate delta-isomerase (347 aa).

Residue 11-12 (RK) coordinates substrate. FMN is bound by residues 72-74 (AMT), Ser-102, and Asn-131. Gln-161 provides a ligand contact to substrate. Residue Glu-162 coordinates Mg(2+). FMN-binding positions include Lys-192, Thr-222, and 287 to 288 (AG).

This sequence belongs to the IPP isomerase type 2 family. Homooctamer. Dimer of tetramers. FMN serves as cofactor. Requires NADPH as cofactor. The cofactor is Mg(2+).

Its subcellular location is the cytoplasm. The enzyme catalyses isopentenyl diphosphate = dimethylallyl diphosphate. In terms of biological role, involved in the biosynthesis of isoprenoids. Catalyzes the 1,3-allylic rearrangement of the homoallylic substrate isopentenyl (IPP) to its allylic isomer, dimethylallyl diphosphate (DMAPP). The polypeptide is Isopentenyl-diphosphate delta-isomerase (Lactococcus lactis subsp. lactis (strain IL1403) (Streptococcus lactis)).